The chain runs to 300 residues: Cation-efflux pump FieF (300 aa).

4 helical membrane-spanning segments follow: residues 12–32 (AAIAATVMASLLLLIKIFAWW), 39–59 (ILAALVDSLVDIAASLTNLLV), 82–102 (AALAQSMFISGSALFLFLTGI), and 114–134 (PGVGIVVTLIALVCTIILVTF). Aspartate 45 and aspartate 49 together coordinate Zn(2+). The Zn(2+) site is built by histidine 153 and aspartate 157. The helical transmembrane segment at 164–184 (ILVALGLAWYGWHRADALFAL) threads the bilayer.

The protein belongs to the cation diffusion facilitator (CDF) transporter (TC 2.A.4) family. FieF subfamily. As to quaternary structure, homodimer.

It localises to the cell inner membrane. The enzyme catalyses Zn(2+)(in) + H(+)(out) = Zn(2+)(out) + H(+)(in). It carries out the reaction Cd(2+)(in) + H(+)(out) = Cd(2+)(out) + H(+)(in). It catalyses the reaction Fe(2+)(in) + H(+)(out) = Fe(2+)(out) + H(+)(in). Divalent metal cation transporter which exports Zn(2+), Cd(2+) and possibly Fe(2+). May be involved in zinc and iron detoxification by efflux. In Citrobacter koseri (strain ATCC BAA-895 / CDC 4225-83 / SGSC4696), this protein is Cation-efflux pump FieF.